We begin with the raw amino-acid sequence, 109 residues long: Small ribosomal subunit protein eS25 (109 aa).

The interval 1–36 (MGGASKKPISTVEKRMKKMAEEQQKKQQKRATTKTG) is disordered. The span at 12–25 (VEKRMKKMAEEQQK) shows a compositional bias: basic and acidic residues.

The protein belongs to the eukaryotic ribosomal protein eS25 family.

This chain is Small ribosomal subunit protein eS25 (rps25e), found in Sulfurisphaera tokodaii (strain DSM 16993 / JCM 10545 / NBRC 100140 / 7) (Sulfolobus tokodaii).